Here is a 91-residue protein sequence, read N- to C-terminus: Probable Fe(2+)-trafficking protein (91 aa).

Belongs to the Fe(2+)-trafficking protein family. As to quaternary structure, monomer.

Its function is as follows. Could be a mediator in iron transactions between iron acquisition and iron-requiring processes, such as synthesis and/or repair of Fe-S clusters in biosynthetic enzymes. The protein is Probable Fe(2+)-trafficking protein of Cronobacter sakazakii (strain ATCC BAA-894) (Enterobacter sakazakii).